We begin with the raw amino-acid sequence, 893 residues long: Pentatricopeptide repeat-containing protein At5g52850, chloroplastic (893 aa).

19 PPR repeats span residues 57–87 (NLDL…MSHR), 88–122 (TVFA…GTHP), 123–157 (NEFT…GFEG), 158–188 (NSVV…LQNA), 189–223 (DTIS…GVPP), 224–257 (NEFT…GIPL), 258–288 (NVVL…SGEQ), 289–323 (DVFL…GLQP), 324–358 (NNFT…GFED), 359–390 (STDV…MVSP), 391–425 (NVVS…EVEP), 426–460 (NVVT…HVDG), 461–491 (EMVV…MKRR), 492–526 (DNIT…GIRM), 527–561 (DQLS…GFSG), 562–592 (AASV…IATP), 593–627 (DVVS…ETEP), 628–658 (DSVT…MKKI), and 664–694 (QVEH…MHLK). The interval 699 to 774 (IFKTLLRACR…KLGKSTVEVQ (76 aa)) is type E motif. The tract at residues 775–806 (GKVHSFVSEDVTRVDKTNGIYAEIESIKEEIK) is type E(+) motif. Positions 807–893 (RFGSPYRGNE…SCKREETSFV (87 aa)) are type DYW motif.

It belongs to the PPR family. PCMP-H subfamily.

The protein localises to the plastid. The protein resides in the chloroplast. The polypeptide is Pentatricopeptide repeat-containing protein At5g52850, chloroplastic (PCMP-H31) (Arabidopsis thaliana (Mouse-ear cress)).